The chain runs to 159 residues: Urease subunit beta 2 (159 aa).

The segment at 1-23 is disordered; that stretch reads MAKEPTEAAHPQPEQTKTNHKAH.

The protein belongs to the urease beta subunit family. Heterotrimer of UreA (gamma), UreB (beta) and UreC (alpha) subunits. Three heterotrimers associate to form the active enzyme.

The protein resides in the cytoplasm. The enzyme catalyses urea + 2 H2O + H(+) = hydrogencarbonate + 2 NH4(+). Its pathway is nitrogen metabolism; urea degradation; CO(2) and NH(3) from urea (urease route): step 1/1. This chain is Urease subunit beta 2, found in Brucella abortus biovar 1 (strain 9-941).